The chain runs to 360 residues: 3-isopropylmalate dehydrogenase (360 aa).

76–89 (GPKWDTIERDIRPE) is a binding site for NAD(+). Positions 96, 106, 134, and 224 each coordinate substrate. Positions 224, 248, and 252 each coordinate Mg(2+). Position 282 to 294 (282 to 294 (GSAPDIAGKGIAN)) interacts with NAD(+).

It belongs to the isocitrate and isopropylmalate dehydrogenases family. LeuB type 1 subfamily. As to quaternary structure, homodimer. Mg(2+) is required as a cofactor. Mn(2+) serves as cofactor.

The protein localises to the cytoplasm. It catalyses the reaction (2R,3S)-3-isopropylmalate + NAD(+) = 4-methyl-2-oxopentanoate + CO2 + NADH. It functions in the pathway amino-acid biosynthesis; L-leucine biosynthesis; L-leucine from 3-methyl-2-oxobutanoate: step 3/4. In terms of biological role, catalyzes the oxidation of 3-carboxy-2-hydroxy-4-methylpentanoate (3-isopropylmalate) to 3-carboxy-4-methyl-2-oxopentanoate. The product decarboxylates to 4-methyl-2 oxopentanoate. The sequence is that of 3-isopropylmalate dehydrogenase from Pseudomonas syringae pv. syringae (strain B728a).